A 409-amino-acid chain; its full sequence is Serine/threonine transporter SstT (409 aa).

9 helical membrane-spanning segments follow: residues 14-34 (GSLVLQILVGIIAGIIVATLS), 48-68 (FVGALKAIAPILVFILVAASI), 82-102 (IVILYLFGTFAAAVTAVLMSF), 141-161 (ALMTGNYIGILAWGVGLGLAL), 192-212 (IGIFGLVSSTFASTGFSAIAG), 216-236 (LLLVLLGAMAIMALIINPAIV), 290-310 (IPLGATINMGGAAITITILTL), 322-342 (ILTAILLSVVAGISACGASGV), and 357-377 (FGISNDIAMQVVAVGFIIGVI).

It belongs to the dicarboxylate/amino acid:cation symporter (DAACS) (TC 2.A.23) family.

It is found in the cell inner membrane. The enzyme catalyses L-serine(in) + Na(+)(in) = L-serine(out) + Na(+)(out). It catalyses the reaction L-threonine(in) + Na(+)(in) = L-threonine(out) + Na(+)(out). Functionally, involved in the import of serine and threonine into the cell, with the concomitant import of sodium (symport system). The polypeptide is Serine/threonine transporter SstT (Shewanella woodyi (strain ATCC 51908 / MS32)).